Reading from the N-terminus, the 237-residue chain is 1-(5-phosphoribosyl)-5-[(5-phosphoribosylamino)methylideneamino] imidazole-4-carboxamide isomerase (237 aa).

The active-site Proton acceptor is Asp8. Asp129 serves as the catalytic Proton donor.

It belongs to the HisA/HisF family.

The protein localises to the cytoplasm. The catalysed reaction is 1-(5-phospho-beta-D-ribosyl)-5-[(5-phospho-beta-D-ribosylamino)methylideneamino]imidazole-4-carboxamide = 5-[(5-phospho-1-deoxy-D-ribulos-1-ylimino)methylamino]-1-(5-phospho-beta-D-ribosyl)imidazole-4-carboxamide. The protein operates within amino-acid biosynthesis; L-histidine biosynthesis; L-histidine from 5-phospho-alpha-D-ribose 1-diphosphate: step 4/9. In Dehalococcoides mccartyi (strain ATCC BAA-2266 / KCTC 15142 / 195) (Dehalococcoides ethenogenes (strain 195)), this protein is 1-(5-phosphoribosyl)-5-[(5-phosphoribosylamino)methylideneamino] imidazole-4-carboxamide isomerase.